The sequence spans 511 residues: UPF0288 protein MK0796 (511 aa).

The protein belongs to the UPF0288 family.

The sequence is that of UPF0288 protein MK0796 from Methanopyrus kandleri (strain AV19 / DSM 6324 / JCM 9639 / NBRC 100938).